Reading from the N-terminus, the 416-residue chain is Glutamyl-tRNA reductase (416 aa).

Substrate contacts are provided by residues Thr-51–Arg-54, Ser-110, Glu-115–Gln-117, and Gln-121. Cys-52 (nucleophile) is an active-site residue. NADP(+) is bound at residue Gly-190–Gly-195.

This sequence belongs to the glutamyl-tRNA reductase family. As to quaternary structure, homodimer.

The catalysed reaction is (S)-4-amino-5-oxopentanoate + tRNA(Glu) + NADP(+) = L-glutamyl-tRNA(Glu) + NADPH + H(+). It functions in the pathway porphyrin-containing compound metabolism; protoporphyrin-IX biosynthesis; 5-aminolevulinate from L-glutamyl-tRNA(Glu): step 1/2. In terms of biological role, catalyzes the NADPH-dependent reduction of glutamyl-tRNA(Glu) to glutamate 1-semialdehyde (GSA). In Francisella tularensis subsp. holarctica (strain OSU18), this protein is Glutamyl-tRNA reductase.